A 264-amino-acid polypeptide reads, in one-letter code: Glutamate racemase (264 aa).

Residues 12 to 13 and 44 to 45 each bind substrate; these read DS and YG. C75 serves as the catalytic Proton donor/acceptor. 76–77 contacts substrate; it reads NT. Residue C186 is the Proton donor/acceptor of the active site. 187–188 serves as a coordination point for substrate; sequence TH.

It belongs to the aspartate/glutamate racemases family.

The enzyme catalyses L-glutamate = D-glutamate. The protein operates within cell wall biogenesis; peptidoglycan biosynthesis. Its function is as follows. Provides the (R)-glutamate required for cell wall biosynthesis. The polypeptide is Glutamate racemase (Stutzerimonas stutzeri (strain A1501) (Pseudomonas stutzeri)).